A 145-amino-acid polypeptide reads, in one-letter code: D-aminoacyl-tRNA deacylase (145 aa).

The short motif at 137 to 138 (GP) is the Gly-cisPro motif, important for rejection of L-amino acids element.

It belongs to the DTD family. Homodimer.

Its subcellular location is the cytoplasm. It catalyses the reaction glycyl-tRNA(Ala) + H2O = tRNA(Ala) + glycine + H(+). It carries out the reaction a D-aminoacyl-tRNA + H2O = a tRNA + a D-alpha-amino acid + H(+). An aminoacyl-tRNA editing enzyme that deacylates mischarged D-aminoacyl-tRNAs. Also deacylates mischarged glycyl-tRNA(Ala), protecting cells against glycine mischarging by AlaRS. Acts via tRNA-based rather than protein-based catalysis; rejects L-amino acids rather than detecting D-amino acids in the active site. By recycling D-aminoacyl-tRNA to D-amino acids and free tRNA molecules, this enzyme counteracts the toxicity associated with the formation of D-aminoacyl-tRNA entities in vivo and helps enforce protein L-homochirality. The chain is D-aminoacyl-tRNA deacylase from Escherichia coli O7:K1 (strain IAI39 / ExPEC).